Reading from the N-terminus, the 425-residue chain is Trigger factor (425 aa).

Residues 163–248 (GDTAVIDFEG…VHEIKTKELP (86 aa)) enclose the PPIase FKBP-type domain.

This sequence belongs to the FKBP-type PPIase family. Tig subfamily.

Its subcellular location is the cytoplasm. The enzyme catalyses [protein]-peptidylproline (omega=180) = [protein]-peptidylproline (omega=0). Its function is as follows. Involved in protein export. Acts as a chaperone by maintaining the newly synthesized protein in an open conformation. Functions as a peptidyl-prolyl cis-trans isomerase. This Bacillus cereus (strain ATCC 10987 / NRS 248) protein is Trigger factor.